The sequence spans 421 residues: TITAN-like protein (421 aa).

The segment at 11 to 32 (EFCTVCRFHHDQGSRHKYFPRH) adopts a C2H2-type 1; degenerate zinc-finger fold. The C2H2-type 2; degenerate zinc-finger motif lies at 70-100 (VWCVFCDEDIVELGSSFACSKAINHFASSDH). The tract at residues 279–306 (ISSSHSTDAGGNVHSGAPPPWLDANDGD) is disordered. 2 consecutive short sequence motifs (nuclear localization signal) follow at residues 328 to 335 (NRKLNPNR) and 377 to 384 (TRKESRKE). The disordered stretch occupies residues 376–421 (GTRKESRKEFEKEKRKLVKTESISTESEPVKIQPYISKRARRESGE). A compositionally biased stretch (basic and acidic residues) spans 377-389 (TRKESRKEFEKEK).

As to expression, also present in cotyledons, hypocotyls, stems, veins of sepals and stigmas, and actively dividing tissues such as shoot apical meristem, root tips and emerging true leaves. Weak expression in petals and anthers, and not detected in mature leaves. In seeds, expressed in both the endosperm and embryo.

Its subcellular location is the nucleus. Functionally, key regulator for endosperm and embryo nuclear divisions. This chain is TITAN-like protein, found in Arabidopsis thaliana (Mouse-ear cress).